The primary structure comprises 284 residues: Tryptophan 2,3-dioxygenase (284 aa).

Residues 51–55, Tyr-113, and Arg-117 contribute to the substrate site; that span reads FIIQH. His-240 serves as a coordination point for heme. Thr-254 is a substrate binding site.

Belongs to the tryptophan 2,3-dioxygenase family. In terms of assembly, homotetramer. Heme serves as cofactor.

It catalyses the reaction L-tryptophan + O2 = N-formyl-L-kynurenine. Its pathway is amino-acid degradation; L-tryptophan degradation via kynurenine pathway; L-kynurenine from L-tryptophan: step 1/2. In terms of biological role, heme-dependent dioxygenase that catalyzes the oxidative cleavage of the L-tryptophan (L-Trp) pyrrole ring and converts L-tryptophan to N-formyl-L-kynurenine. Catalyzes the oxidative cleavage of the indole moiety. The protein is Tryptophan 2,3-dioxygenase of Arthrobacter sp. (strain FB24).